Consider the following 80-residue polypeptide: Putative membrane protein insertion efficiency factor (80 aa).

The protein belongs to the UPF0161 family.

The protein resides in the cell membrane. Could be involved in insertion of integral membrane proteins into the membrane. The protein is Putative membrane protein insertion efficiency factor of Corynebacterium jeikeium (strain K411).